Here is a 225-residue protein sequence, read N- to C-terminus: MKIVFALGGSVLMPKEGASVDKIKEYADVFKKMKDENNEICIVVGGGNTARTYISVAREFANESFCDEIGILATRMNSMLLISALDNYAVKKVPENFKDAEIILNLNKIVVMGGTHPAHTTDAVAASLAEYIDADMLVVATNVDGVYDKDPRKHADAKKIKQLTTKELLNITGSASIEAGSSTIIDPLASKIIDRAKLKTIVIEGAPEEILKILNNTHSGTIINP.

Residue 9-10 (GS) participates in ATP binding. Gly46 provides a ligand contact to UMP. 2 residues coordinate ATP: Gly47 and Arg51. UMP contacts are provided by residues Asp67 and 115-121 (THPAHTT). The ATP site is built by Thr141, Asn142, Tyr147, and Asp150.

The protein belongs to the UMP kinase family. As to quaternary structure, homohexamer.

It localises to the cytoplasm. It carries out the reaction UMP + ATP = UDP + ADP. It functions in the pathway pyrimidine metabolism; CTP biosynthesis via de novo pathway; UDP from UMP (UMPK route): step 1/1. Its activity is regulated as follows. Inhibited by UTP. Its function is as follows. Catalyzes the reversible phosphorylation of UMP to UDP. This Methanococcus aeolicus (strain ATCC BAA-1280 / DSM 17508 / OCM 812 / Nankai-3) protein is Uridylate kinase.